The sequence spans 378 residues: Ribosomal RNA large subunit methyltransferase G (378 aa).

Belongs to the methyltransferase superfamily. RlmG family.

The protein localises to the cytoplasm. It carries out the reaction guanosine(1835) in 23S rRNA + S-adenosyl-L-methionine = N(2)-methylguanosine(1835) in 23S rRNA + S-adenosyl-L-homocysteine + H(+). Functionally, specifically methylates the guanine in position 1835 (m2G1835) of 23S rRNA. The polypeptide is Ribosomal RNA large subunit methyltransferase G (Shewanella baltica (strain OS155 / ATCC BAA-1091)).